A 559-amino-acid chain; its full sequence is Glucosylglycerate phosphorylase (559 aa).

Aspartate 229 acts as the Nucleophile in catalysis.

This sequence belongs to the glycosyl hydrolase 13 family. Glucosylglycerate phosphorylase subfamily.

The catalysed reaction is (2R)-2-O-(alpha-D-glucopyranosyl)-glycerate + phosphate = (R)-glycerate + alpha-D-glucose 1-phosphate. Functionally, catalyzes the reversible phosphorolysis of glucosylglycerate into alpha-D-glucose 1-phosphate (Glc1P) and D-glycerate (also called (R)-glycerate). May be a regulator of intracellular levels of glucosylglycerate, a compatible solute that primarily protects organisms facing salt stress and very specific nutritional constraints. Cannot catalyze the phosphorolysis of sucrose. Does not act on other sugars such as alpha-D-galactose 1-phosphate, alpha-D-mannose 1-phosphate or beta-D-glucose 1-phosphate; in vitro D-erythronate can substitute for D-glycerate with a much lower efficiency. The chain is Glucosylglycerate phosphorylase (ycjM) from Escherichia coli (strain K12).